Reading from the N-terminus, the 149-residue chain is Oligosaccharyltransferase complex subunit OSTC (149 aa).

Residues 1-32 lie on the Cytoplasmic side of the membrane; the sequence is METLFRLPFAVLECPNIKLKRPGWVHMPSAMT. Residues 33–53 traverse the membrane as a helical segment; that stretch reads VYALVVVSYFLITGGIIYDVI. The Extracellular segment spans residues 54 to 83; the sequence is VEPPSVGSMTDEHGHQRPVAFLAYRVNGQY. The helical transmembrane segment at 84–104 threads the bilayer; the sequence is IMEGLASSFLFTMGGLGFIIL. Residues 105 to 117 are Cytoplasmic-facing; it reads DRSNAPNIPKLNR. Residues 118–138 form a helical membrane-spanning segment; the sequence is FLLLFIGFVSVLLSFFMARVF. At 139–149 the chain is on the extracellular side; that stretch reads MRMKLPGYLMG.

The protein belongs to the OSTC family. As to quaternary structure, specific component of the STT3A-containing form of the oligosaccharyltransferase (OST) complex.

The protein resides in the membrane. Its pathway is protein modification; protein glycosylation. In terms of biological role, specific component of the STT3A-containing form of the oligosaccharyl transferase (OST) complex that catalyzes the initial transfer of a defined glycan (Glc(3)Man(9)GlcNAc(2) in eukaryotes) from the lipid carrier dolichol-pyrophosphate to an asparagine residue within an Asn-X-Ser/Thr consensus motif in nascent polypeptide chains, the first step in protein N-glycosylation. N-glycosylation occurs cotranslationally and the complex associates with the Sec61 complex at the channel-forming translocon complex that mediates protein translocation across the endoplasmic reticulum (ER). All subunits are required for a maximal enzyme activity. The sequence is that of Oligosaccharyltransferase complex subunit OSTC from Gallus gallus (Chicken).